The primary structure comprises 228 residues: Geranylgeranylglyceryl phosphate synthase (228 aa).

Sn-glycerol 1-phosphate is bound at residue Lys13. Asp15 and Thr41 together coordinate Mg(2+). Sn-glycerol 1-phosphate-binding positions include 159 to 164, Gly189, and 209 to 210; these read YVEYSG and GN.

Belongs to the GGGP/HepGP synthase family. Group I subfamily. Requires Mg(2+) as cofactor.

Its subcellular location is the cytoplasm. The catalysed reaction is sn-glycerol 1-phosphate + (2E,6E,10E)-geranylgeranyl diphosphate = sn-3-O-(geranylgeranyl)glycerol 1-phosphate + diphosphate. It participates in membrane lipid metabolism; glycerophospholipid metabolism. Functionally, prenyltransferase that catalyzes the transfer of the geranylgeranyl moiety of geranylgeranyl diphosphate (GGPP) to the C3 hydroxyl of sn-glycerol-1-phosphate (G1P). This reaction is the first ether-bond-formation step in the biosynthesis of archaeal membrane lipids. This is Geranylgeranylglyceryl phosphate synthase from Methanosphaerula palustris (strain ATCC BAA-1556 / DSM 19958 / E1-9c).